A 461-amino-acid chain; its full sequence is Bifunctional protein GlmU (461 aa).

The pyrophosphorylase stretch occupies residues 1-235 (MKAIILAAGL…ITEIFGVNDR (235 aa)). UDP-N-acetyl-alpha-D-glucosamine-binding positions include 6–9 (LAAG), lysine 20, glutamine 71, and 77–78 (GT). Aspartate 102 provides a ligand contact to Mg(2+). Residues glycine 145, glutamate 160, asparagine 175, and asparagine 233 each contribute to the UDP-N-acetyl-alpha-D-glucosamine site. Residue asparagine 233 coordinates Mg(2+). Positions 236–256 (WELSFAESVIKMRILENLARS) are linker. Residues 257–461 (GVTIHSPESV…LEDKSKVKDE (205 aa)) are N-acetyltransferase. Positions 339 and 357 each coordinate UDP-N-acetyl-alpha-D-glucosamine. Catalysis depends on histidine 369, which acts as the Proton acceptor. Residues tyrosine 372 and asparagine 383 each coordinate UDP-N-acetyl-alpha-D-glucosamine. 4 residues coordinate acetyl-CoA: alanine 386, serine 411, glycine 429, and arginine 446.

It in the N-terminal section; belongs to the N-acetylglucosamine-1-phosphate uridyltransferase family. In the C-terminal section; belongs to the transferase hexapeptide repeat family. Homotrimer. The cofactor is Mg(2+).

It is found in the cytoplasm. It catalyses the reaction alpha-D-glucosamine 1-phosphate + acetyl-CoA = N-acetyl-alpha-D-glucosamine 1-phosphate + CoA + H(+). The catalysed reaction is N-acetyl-alpha-D-glucosamine 1-phosphate + UTP + H(+) = UDP-N-acetyl-alpha-D-glucosamine + diphosphate. It functions in the pathway nucleotide-sugar biosynthesis; UDP-N-acetyl-alpha-D-glucosamine biosynthesis; N-acetyl-alpha-D-glucosamine 1-phosphate from alpha-D-glucosamine 6-phosphate (route II): step 2/2. The protein operates within nucleotide-sugar biosynthesis; UDP-N-acetyl-alpha-D-glucosamine biosynthesis; UDP-N-acetyl-alpha-D-glucosamine from N-acetyl-alpha-D-glucosamine 1-phosphate: step 1/1. It participates in bacterial outer membrane biogenesis; LPS lipid A biosynthesis. Its function is as follows. Catalyzes the last two sequential reactions in the de novo biosynthetic pathway for UDP-N-acetylglucosamine (UDP-GlcNAc). The C-terminal domain catalyzes the transfer of acetyl group from acetyl coenzyme A to glucosamine-1-phosphate (GlcN-1-P) to produce N-acetylglucosamine-1-phosphate (GlcNAc-1-P), which is converted into UDP-GlcNAc by the transfer of uridine 5-monophosphate (from uridine 5-triphosphate), a reaction catalyzed by the N-terminal domain. The sequence is that of Bifunctional protein GlmU from Hydrogenobaculum sp. (strain Y04AAS1).